Reading from the N-terminus, the 375-residue chain is MMEKTVRRGTRTGFTTGACSAAAARAAVLGLVEGAVPEAVDCLLPNGDVVRFAVNDGACEAGQAAHAMVIKDAGDDPDCTDKAHLTADVRVLPGRAGEVVLCGGFGVGTVTMAGLGLEVGGPAINPVPRRNIEENVRAVGGPLLANAGIEVTISVPQGVEMARKTLNARLGILGGISILGTTGIVKPYSTSAYRASVVQGVQVAATLGHGVVVLTTGGRTEQFAMKERPELPAACFVQMGDFLRYALDEAVAQGLREVVIGGMVGKLTKIAQGETITHANRAEVDTQLLAELAARVGAPPDVCAEIAAAETARFGAERMQALGLGEPFHHALAQAVVQTLTAPDRYGDRFHLTVLVCDFDGSKITEAASGPAATA.

The protein belongs to the CbiD family.

It catalyses the reaction Co-precorrin-5B + S-adenosyl-L-methionine = Co-precorrin-6A + S-adenosyl-L-homocysteine. It functions in the pathway cofactor biosynthesis; adenosylcobalamin biosynthesis; cob(II)yrinate a,c-diamide from sirohydrochlorin (anaerobic route): step 6/10. Catalyzes the methylation of C-1 in cobalt-precorrin-5B to form cobalt-precorrin-6A. The protein is Cobalt-precorrin-5B C(1)-methyltransferase of Paracidovorax citrulli (strain AAC00-1) (Acidovorax citrulli).